The chain runs to 491 residues: Probable glycine dehydrogenase (decarboxylating) subunit 2 (491 aa).

Lys264 bears the N6-(pyridoxal phosphate)lysine mark.

Belongs to the GcvP family. C-terminal subunit subfamily. As to quaternary structure, the glycine cleavage system is composed of four proteins: P, T, L and H. In this organism, the P 'protein' is a heterodimer of two subunits. It depends on pyridoxal 5'-phosphate as a cofactor.

It carries out the reaction N(6)-[(R)-lipoyl]-L-lysyl-[glycine-cleavage complex H protein] + glycine + H(+) = N(6)-[(R)-S(8)-aminomethyldihydrolipoyl]-L-lysyl-[glycine-cleavage complex H protein] + CO2. In terms of biological role, the glycine cleavage system catalyzes the degradation of glycine. The P protein binds the alpha-amino group of glycine through its pyridoxal phosphate cofactor; CO(2) is released and the remaining methylamine moiety is then transferred to the lipoamide cofactor of the H protein. The sequence is that of Probable glycine dehydrogenase (decarboxylating) subunit 2 from Coxiella burnetii (strain CbuK_Q154) (Coxiella burnetii (strain Q154)).